The chain runs to 100 residues: Aspartyl/glutamyl-tRNA(Asn/Gln) amidotransferase subunit C (100 aa).

This sequence belongs to the GatC family. In terms of assembly, heterotrimer of A, B and C subunits.

The catalysed reaction is L-glutamyl-tRNA(Gln) + L-glutamine + ATP + H2O = L-glutaminyl-tRNA(Gln) + L-glutamate + ADP + phosphate + H(+). It catalyses the reaction L-aspartyl-tRNA(Asn) + L-glutamine + ATP + H2O = L-asparaginyl-tRNA(Asn) + L-glutamate + ADP + phosphate + 2 H(+). In terms of biological role, allows the formation of correctly charged Asn-tRNA(Asn) or Gln-tRNA(Gln) through the transamidation of misacylated Asp-tRNA(Asn) or Glu-tRNA(Gln) in organisms which lack either or both of asparaginyl-tRNA or glutaminyl-tRNA synthetases. The reaction takes place in the presence of glutamine and ATP through an activated phospho-Asp-tRNA(Asn) or phospho-Glu-tRNA(Gln). This Streptococcus sanguinis (strain SK36) protein is Aspartyl/glutamyl-tRNA(Asn/Gln) amidotransferase subunit C.